The following is a 2004-amino-acid chain: Alpha-2-macroglobulin homolog (2004 aa).

An N-terminal signal peptide occupies residues Met-1 to Ile-27.

It belongs to the protease inhibitor I39 (alpha-2-macroglobulin) family. Bacterial alpha-2-macroglobulin subfamily.

The chain is Alpha-2-macroglobulin homolog from Yersinia pestis.